The following is a 239-amino-acid chain: Heptaprenylglyceryl phosphate synthase (239 aa).

A sn-glycerol 1-phosphate-binding site is contributed by Lys-12. Mg(2+) is bound by residues Asp-14 and Thr-40. Sn-glycerol 1-phosphate contacts are provided by residues 159–164 (YLEYSG), Gly-189, and 209–210 (GN).

This sequence belongs to the GGGP/HepGP synthase family. Group I subfamily. In terms of assembly, homodimer. It depends on Mg(2+) as a cofactor.

The catalysed reaction is sn-glycerol 1-phosphate + all-trans-heptaprenyl diphosphate = 3-heptaprenyl-sn-glycero-1-phosphate + diphosphate. The protein operates within membrane lipid metabolism; glycerophospholipid metabolism. Its function is as follows. Prenyltransferase that catalyzes in vivo the transfer of the heptaprenyl moiety of heptaprenyl pyrophosphate (HepPP; 35 carbon atoms) to the C3 hydroxyl of sn-glycerol-1-phosphate (G1P), producing heptaprenylglyceryl phosphate (HepGP). This reaction is an ether-bond-formation step in the biosynthesis of archaea-type G1P-based membrane lipids found in Bacillales. The sequence is that of Heptaprenylglyceryl phosphate synthase from Geobacillus thermodenitrificans (strain NG80-2).